Consider the following 239-residue polypeptide: Large ribosomal subunit protein uL1 (239 aa).

The protein belongs to the universal ribosomal protein uL1 family. Part of the 50S ribosomal subunit.

In terms of biological role, binds directly to 23S rRNA. The L1 stalk is quite mobile in the ribosome, and is involved in E site tRNA release. Functionally, protein L1 is also a translational repressor protein, it controls the translation of the L11 operon by binding to its mRNA. The polypeptide is Large ribosomal subunit protein uL1 (Acidothermus cellulolyticus (strain ATCC 43068 / DSM 8971 / 11B)).